Reading from the N-terminus, the 93-residue chain is Parbolysin P4 (93 aa).

Intrachain disulfides connect Cys-16–Cys-37, Cys-22–Cys-33, and Cys-47–Cys-60.

It belongs to the worm cytolysin family. As to expression, localized within the skin and proboscis and are most readily isolated from body mucus secretions.

Its subcellular location is the secreted. Cytolysin that shows hemolytic activity (on bovine erythrocytes, HC(50)=5.75 mg/ml). This hemolytic activity is completely inhibited by small unilamelar vesicles composed of PC/PG, PC/PI and PC/PS in 1:1 molar ratios (with at least 100 mg/ml concentration). In Parborlasia corrugatus (Antarctic nemertean worm), this protein is Parbolysin P4.